The primary structure comprises 545 residues: Chaperonin GroEL 1 (545 aa).

Residues 29 to 32 (TLGP), 86 to 90 (DGTTT), Gly-413, 479 to 481 (DAA), and Asp-495 contribute to the ATP site. Positions 525 to 545 (PEPKENNPAGSGAGMGGDFDY) are disordered. Residues 535 to 545 (SGAGMGGDFDY) are compositionally biased toward gly residues.

The protein belongs to the chaperonin (HSP60) family. In terms of assembly, forms a cylinder of 14 subunits composed of two heptameric rings stacked back-to-back. Interacts with the co-chaperonin GroES.

It is found in the cytoplasm. It carries out the reaction ATP + H2O + a folded polypeptide = ADP + phosphate + an unfolded polypeptide.. Together with its co-chaperonin GroES, plays an essential role in assisting protein folding. The GroEL-GroES system forms a nano-cage that allows encapsulation of the non-native substrate proteins and provides a physical environment optimized to promote and accelerate protein folding. The sequence is that of Chaperonin GroEL 1 from Thermosynechococcus vestitus (strain NIES-2133 / IAM M-273 / BP-1).